The chain runs to 146 residues: MAAEKKTEVLEKKISIKPRYKMTRGIQVETLMKCADNSGAKILRCIGVKRYRGRLNRLPAAAPGDICVVSVKKGKPELRKKVHYAILIRQKKIWRRTDGSHIMFEDNAAVLINNKGELRGAQIAGPVPREVADMWPKISSQASSIN.

It belongs to the universal ribosomal protein uL14 family.

This Encephalitozoon cuniculi (strain GB-M1) (Microsporidian parasite) protein is Large ribosomal subunit protein uL14 (RPL23).